The chain runs to 255 residues: Probable septum site-determining protein MinC (255 aa).

Basic and acidic residues predominate over residues 103-115 (SHGRRPRGERSEE). The disordered stretch occupies residues 103-136 (SHGRRPRGERSEEAAEAVPAAAEPVPAPAASPAP). The span at 127–136 (VPAPAASPAP) shows a compositional bias: pro residues.

This sequence belongs to the MinC family. As to quaternary structure, interacts with MinD and FtsZ.

Cell division inhibitor that blocks the formation of polar Z ring septums. Rapidly oscillates between the poles of the cell to destabilize FtsZ filaments that have formed before they mature into polar Z rings. Prevents FtsZ polymerization. In Ralstonia nicotianae (strain ATCC BAA-1114 / GMI1000) (Ralstonia solanacearum), this protein is Probable septum site-determining protein MinC.